Reading from the N-terminus, the 489-residue chain is MTFRHCVAVDLGASSGRVMLARYDSKHRTLTLREIHRFVNCLQKTDGFDTWDIDSLEKDIRLGLKKVCNEGILIDSIGIDTWGVDYVLLDKQGQRVGLPVSYRDNRTTGIMPQALVQIGKSEIYRRSGIQFLPFNTIYQLRALTKQQPELTAQVAHALLMPDYFSYRLTGEMNWEYTNATTTQLVNINTDDWDDTLLAWTGAKKSWFGRPSHPGNVIGDWICPQGNRIPVVAVASHDTASAVIASPLANKHSAYLSSGTWSLMGFESKKPYTTDEALAANITNEGGAEGRYRVLKNIMGLWLLQRVLKERRITDLPALIAQTEALPACRFLINPNDDRFINPDDMRAEIQAACRETDQPVPVSDAELARCIFDSLALLYADILHELANLRGEKFTQLHIVGGGCQNALLNQLCADACGIRVMAGPVEASTLGNIGIQLMTLDELNNVDDFRQVVSANYDLTTYIPNPDSEIARHVAQFQPKRQTKELCA.

Residue 13–17 (ASSGR) participates in ATP binding. Cysteines 68 and 222 form a disulfide. Residues glycine 83 and 236–238 (HDT) each bind substrate. The active-site Proton acceptor is the aspartate 237. Threonine 259 is an ATP binding site. Residue asparagine 296 participates in substrate binding. Residue glutamine 304 coordinates ATP. A disulfide bond links cysteine 353 and cysteine 370. Glycine 402 is a binding site for ATP. Residues cysteine 413 and cysteine 417 are joined by a disulfide bond.

It belongs to the rhamnulokinase family. It depends on Mg(2+) as a cofactor.

It catalyses the reaction L-rhamnulose + ATP = L-rhamnulose 1-phosphate + ADP + H(+). Its pathway is carbohydrate degradation; L-rhamnose degradation; glycerone phosphate from L-rhamnose: step 2/3. In terms of biological role, involved in the catabolism of L-rhamnose (6-deoxy-L-mannose). Catalyzes the transfer of the gamma-phosphate group from ATP to the 1-hydroxyl group of L-rhamnulose to yield L-rhamnulose 1-phosphate. The sequence is that of Rhamnulokinase from Salmonella paratyphi B (strain ATCC BAA-1250 / SPB7).